Reading from the N-terminus, the 438-residue chain is UPF0597 protein YE0448 (438 aa).

This sequence belongs to the UPF0597 family.

The chain is UPF0597 protein YE0448 from Yersinia enterocolitica serotype O:8 / biotype 1B (strain NCTC 13174 / 8081).